A 138-amino-acid polypeptide reads, in one-letter code: Large ribosomal subunit protein bL19 (138 aa).

This sequence belongs to the bacterial ribosomal protein bL19 family.

This protein is located at the 30S-50S ribosomal subunit interface and may play a role in the structure and function of the aminoacyl-tRNA binding site. The protein is Large ribosomal subunit protein bL19 of Rickettsia typhi (strain ATCC VR-144 / Wilmington).